Here is a 290-residue protein sequence, read N- to C-terminus: Eukaryotic translation initiation factor 3 subunit F-2 (290 aa).

The region spanning V12 to G150 is the MPN domain.

This sequence belongs to the eIF-3 subunit F family. In terms of assembly, component of the eukaryotic translation initiation factor 3 (eIF-3) complex. The eIF-3 complex interacts with pix.

The protein resides in the cytoplasm. In terms of biological role, component of the eukaryotic translation initiation factor 3 (eIF-3) complex, which is involved in protein synthesis of a specialized repertoire of mRNAs and, together with other initiation factors, stimulates binding of mRNA and methionyl-tRNAi to the 40S ribosome. The eIF-3 complex specifically targets and initiates translation of a subset of mRNAs involved in cell proliferation. The chain is Eukaryotic translation initiation factor 3 subunit F-2 from Drosophila mojavensis (Fruit fly).